We begin with the raw amino-acid sequence, 39 residues long: Adipokinetic prohormone type 2 (39 aa).

At Gln1 the chain carries Pyrrolidone carboxylic acid. A Tryptophan amide modification is found at Trp8.

This sequence belongs to the AKH/HRTH/RPCH family. In terms of assembly, adipokinetic hormone precursor-related peptide (APRP) can form three type of disulfide-bond dimers: p1 (alpha-alpha), p2 (alpha-beta), and p3 (beta-beta).

Its subcellular location is the secreted. Its function is as follows. This hormone, released from cells in the corpora cardiaca, causes release of diglycerides from the fat body and stimulation of muscles to use these diglycerides as an energy source during energy-demanding processes. The sequence is that of Adipokinetic prohormone type 2 from Schistocerca gregaria (Desert locust).